The sequence spans 204 residues: Peptidyl-tRNA hydrolase 2 (204 aa).

Tyr-37 contributes to the tRNA binding site. Residue His-42 is the Proton acceptor of the active site. TRNA-binding residues include Phe-86, Asn-88, and Asn-134.

It belongs to the PTH family. As to quaternary structure, monomer.

It is found in the cytoplasm. It catalyses the reaction an N-acyl-L-alpha-aminoacyl-tRNA + H2O = an N-acyl-L-amino acid + a tRNA + H(+). Its function is as follows. Hydrolyzes ribosome-free peptidyl-tRNAs (with 1 or more amino acids incorporated), which drop off the ribosome during protein synthesis, or as a result of ribosome stalling. Catalyzes the release of premature peptidyl moieties from peptidyl-tRNA molecules trapped in stalled 50S ribosomal subunits, and thus maintains levels of free tRNAs and 50S ribosomes. The protein is Peptidyl-tRNA hydrolase 2 of Corynebacterium glutamicum (strain ATCC 13032 / DSM 20300 / JCM 1318 / BCRC 11384 / CCUG 27702 / LMG 3730 / NBRC 12168 / NCIMB 10025 / NRRL B-2784 / 534).